A 389-amino-acid chain; its full sequence is Nicotinate phosphoribosyltransferase (389 aa).

His216 is subject to Phosphohistidine; by autocatalysis.

It belongs to the NAPRTase family. Transiently phosphorylated on a His residue during the reaction cycle. Phosphorylation strongly increases the affinity for substrates and increases the rate of nicotinate D-ribonucleotide production. Dephosphorylation regenerates the low-affinity form of the enzyme, leading to product release.

It catalyses the reaction nicotinate + 5-phospho-alpha-D-ribose 1-diphosphate + ATP + H2O = nicotinate beta-D-ribonucleotide + ADP + phosphate + diphosphate. Its pathway is cofactor biosynthesis; NAD(+) biosynthesis; nicotinate D-ribonucleotide from nicotinate: step 1/1. Functionally, catalyzes the synthesis of beta-nicotinate D-ribonucleotide from nicotinate and 5-phospho-D-ribose 1-phosphate at the expense of ATP. This Ralstonia nicotianae (strain ATCC BAA-1114 / GMI1000) (Ralstonia solanacearum) protein is Nicotinate phosphoribosyltransferase.